The chain runs to 405 residues: POC1 centriolar protein homolog A (405 aa).

WD repeat units follow at residues 17–56 (GHRDAVTCVDFSLNTKHLASGSMDSTLMIWHMKPQSRAYR), 59–98 (GHKDAVTCVNFSPSGHLLASGSRDKTVRIWVPNVKGESTV), 101–140 (AHTATVRSVHFCSDGQSLVTASDDKTVKVWSTHRQRFLFS), 143–182 (QHINWVRCAKFSPDGRLIVSASDDKTVKLWDKTSRECIHS), 185–224 (EHGGFVTYVDFHPSGTCIAAAGMDNTVKVWDARTHRLLQH), 227–266 (LHSAAVNALSFHPSGNYLITASSDSTLKILDLMEGRLLYT), and 269–308 (GHQGPATTVAFSRTGEYFASGGSDEQVMVWKSNFDIVDYG). The interval 313-352 (RRPPPLTSSSGTLPKMDLPVPPGRDRSLESVQGEPQESIS) is disordered. Polar residues predominate over residues 341–352 (ESVQGEPQESIS). Positions 367-395 (QLDILTQTVSILEQRLTLTEDRLKQCLEN) form a coiled coil.

This sequence belongs to the WD repeat POC1 family. In terms of assembly, interacts with POC1B. In terms of tissue distribution, widely expressed in embryonic and adult tissues.

It localises to the cytoplasm. The protein resides in the cytoskeleton. Its subcellular location is the microtubule organizing center. It is found in the centrosome. The protein localises to the centriole. It localises to the cilium basal body. The protein resides in the spindle pole. Plays an important role in centriole assembly and/or stability and ciliogenesis. Involved in early steps of centriole duplication, as well as in the later steps of centriole length control. Acts in concert with POC1B to ensure centriole integrity and proper mitotic spindle formation. The chain is POC1 centriolar protein homolog A (Poc1a) from Mus musculus (Mouse).